The sequence spans 367 residues: Peptide chain release factor 2 (367 aa).

Position 254 is an N5-methylglutamine (Q254).

This sequence belongs to the prokaryotic/mitochondrial release factor family. Post-translationally, methylated by PrmC. Methylation increases the termination efficiency of RF2.

It localises to the cytoplasm. Peptide chain release factor 2 directs the termination of translation in response to the peptide chain termination codons UGA and UAA. The sequence is that of Peptide chain release factor 2 from Neisseria meningitidis serogroup A / serotype 4A (strain DSM 15465 / Z2491).